The sequence spans 1102 residues: Protein MMS22-like (1102 aa).

This sequence belongs to the MMS22 family. MMS22L subfamily.

Its subcellular location is the nucleus. The protein resides in the chromosome. In terms of biological role, involved in recombination-dependent repair of stalled or collapsed replication forks. The polypeptide is Protein MMS22-like (Drosophila melanogaster (Fruit fly)).